A 272-amino-acid polypeptide reads, in one-letter code: HTH-type transcriptional repressor AllR (272 aa).

Residues 1 to 20 (MTEVRRRGRPGQAEPTAQKG) are disordered. An HTH iclR-type domain is found at 21-83 (AQALERGIAI…SQLGWWHIGL (63 aa)). The H-T-H motif DNA-binding region spans 43-62 (VSDISGSLDLPLSTTFRLLK). In terms of domain architecture, IclR-ED spans 98–267 (VLSVAGPFMH…AKDISTALGL (170 aa)). Glyoxylate contacts are provided by residues 154 to 156 (SGA), Asp-207, Cys-217, and 234 to 236 (SIS).

Its function is as follows. Negative regulator of allantoin and glyoxylate utilization operons. Binds to the gcl promoter and to the allS-allA intergenic region. The protein is HTH-type transcriptional repressor AllR (allR) of Salmonella typhi.